The chain runs to 33 residues: Ranatuerin-1T (33 aa).

An intrachain disulfide couples Cys27 to Cys33.

Expressed by the skin glands.

The protein resides in the secreted. Its function is as follows. Antibacterial activity against Gram-positive bacterium S.aureus and Gram-negative bacterium E.coli. No activity against C.albicans. In Rana temporaria (European common frog), this protein is Ranatuerin-1T.